Here is a 328-residue protein sequence, read N- to C-terminus: Alanine racemase (328 aa).

Lys-33 (proton acceptor; specific for D-alanine) is an active-site residue. Lys-33 is modified (N6-(pyridoxal phosphate)lysine). Arg-118 serves as a coordination point for substrate. Catalysis depends on Tyr-237, which acts as the Proton acceptor; specific for L-alanine. Met-283 serves as a coordination point for substrate.

The protein belongs to the alanine racemase family. Requires pyridoxal 5'-phosphate as cofactor.

The catalysed reaction is L-alanine = D-alanine. Its pathway is amino-acid biosynthesis; D-alanine biosynthesis; D-alanine from L-alanine: step 1/1. Its function is as follows. Catalyzes the interconversion of L-alanine and D-alanine. May also act on other amino acids. This is Alanine racemase (alr) from Campylobacter jejuni subsp. jejuni serotype O:6 (strain 81116 / NCTC 11828).